A 300-amino-acid chain; its full sequence is Cation-efflux pump FieF (300 aa).

4 helical membrane-spanning segments follow: residues 12 to 32 (AAIA…FAWW), 39 to 59 (ILAA…NLLV), 82 to 102 (AALA…LTGI), and 114 to 134 (PGVG…LVTF). 2 residues coordinate Zn(2+): D45 and D49. Zn(2+)-binding residues include H153 and D157. The helical transmembrane segment at 164 to 184 (ILVALGLAWYGWHRADALFAL) threads the bilayer.

It belongs to the cation diffusion facilitator (CDF) transporter (TC 2.A.4) family. FieF subfamily. As to quaternary structure, homodimer.

It is found in the cell inner membrane. It catalyses the reaction Zn(2+)(in) + H(+)(out) = Zn(2+)(out) + H(+)(in). The catalysed reaction is Cd(2+)(in) + H(+)(out) = Cd(2+)(out) + H(+)(in). It carries out the reaction Fe(2+)(in) + H(+)(out) = Fe(2+)(out) + H(+)(in). In terms of biological role, divalent metal cation transporter which exports Zn(2+), Cd(2+) and possibly Fe(2+). May be involved in zinc and iron detoxification by efflux. The protein is Cation-efflux pump FieF of Citrobacter koseri (strain ATCC BAA-895 / CDC 4225-83 / SGSC4696).